Reading from the N-terminus, the 463-residue chain is Dipeptidyl peptidase 1 (463 aa).

The N-terminal stretch at 1-24 (MGVGPASLLAALLLLLSGDRAVRC) is a signal peptide. 3 N-linked (GlcNAc...) asparagine glycosylation sites follow: asparagine 29, asparagine 53, and asparagine 119. 5 disulfides stabilise this stretch: cysteine 30–cysteine 118, cysteine 54–cysteine 136, cysteine 255–cysteine 298, cysteine 291–cysteine 331, and cysteine 321–cysteine 337. Residues 135-230 (ACFTGKKVGT…TAEIQQKILH (96 aa)) constitute a propeptide that is removed on maturation. Residue cysteine 258 is part of the active site. A glycan (N-linked (GlcNAc...) asparagine) is linked at asparagine 276. Chloride contacts are provided by phenylalanine 302 and tyrosine 304. Residue tyrosine 347 coordinates chloride. Active-site residues include histidine 405 and asparagine 427.

This sequence belongs to the peptidase C1 family. As to quaternary structure, tetramer of heterotrimers consisting of exclusion domain, heavy- and light chains. Requires chloride as cofactor.

It is found in the lysosome. The catalysed reaction is Release of an N-terminal dipeptide, Xaa-Yaa-|-Zaa-, except when Xaa is Arg or Lys, or Yaa or Zaa is Pro.. Thiol protease. Has dipeptidylpeptidase activity. Active against a broad range of dipeptide substrates composed of both polar and hydrophobic amino acids. Proline cannot occupy the P1 position and arginine cannot occupy the P2 position of the substrate. Can act as both an exopeptidase and endopeptidase. Activates serine proteases such as elastase, cathepsin G and granzymes A and B. The chain is Dipeptidyl peptidase 1 (CTSC) from Macaca fascicularis (Crab-eating macaque).